Here is a 425-residue protein sequence, read N- to C-terminus: Probable mannosyltransferase KTR2 (425 aa).

Over 1–13 (MQICKVFLTQVKK) the chain is Cytoplasmic. A helical; Signal-anchor for type II membrane protein transmembrane segment spans residues 14-33 (LLFVSLLFCLIAQTCWLALV). The interval 34 to 89 (PYQRQLSLDSYFFRRSREVSSRYDFTRRRHMNQTLKLSSNTYNDEPLNKTKGIKNQ) is stem region. The Lumenal portion of the chain corresponds to 34–425 (PYQRQLSLDS…SGKYFLKHDS (392 aa)). Asparagine 65, asparagine 81, asparagine 92, and asparagine 167 each carry an N-linked (GlcNAc...) asparagine glycan. The segment at 90 to 425 (RENATLLMLV…SGKYFLKHDS (336 aa)) is catalytic. The Nucleophile role is filled by glutamate 313.

This sequence belongs to the glycosyltransferase 15 family.

It localises to the golgi apparatus membrane. Its pathway is protein modification; protein glycosylation. Functionally, involved in N-linked glycosylation. Transfers an alpha-D-mannosyl residue from GDP-mannose into lipid-linked oligosaccharide, forming an alpha-(1-&gt;2)-D-mannosyl-D-mannose linkage. This chain is Probable mannosyltransferase KTR2 (KTR2), found in Saccharomyces cerevisiae (strain ATCC 204508 / S288c) (Baker's yeast).